Here is a 457-residue protein sequence, read N- to C-terminus: Multidrug resistance protein MdtK (457 aa).

Over 1–10 (MQKYISEARL) the chain is Cytoplasmic. The chain crosses the membrane as a helical span at residues 11 to 31 (LLALAIPVILAQIAQTAMGFV). Topologically, residues 32–52 (DTVMAGGYSATDMAAVAIGTS) are periplasmic. The helical transmembrane segment at 53-73 (IWLPAILFGHGLLLALTPVIA) threads the bilayer. The Cytoplasmic segment spans residues 74 to 92 (QLNGSGRRERIAHQVRQGF). A helical transmembrane segment spans residues 93 to 113 (WLAGFVSVLIMLVLWNAGYII). Topologically, residues 114-126 (RYMENIDPALADK) are periplasmic. A helical transmembrane segment spans residues 127-147 (AVGYLRALLWGAPGYLFFQVA). Over 148–159 (RNQCEGLAKAKP) the chain is Cytoplasmic. Residues 160–180 (GMVMGFIGLLVNIPVNYIFIY) form a helical membrane-spanning segment. Topologically, residues 181–188 (GHFGMPEL) are periplasmic. The chain crosses the membrane as a helical span at residues 189–209 (GGVGCGVATAAVYWVMFLAMV). Topologically, residues 210–242 (SYIKRARSMRDIRNEKGTAKPEPAVMKRLIQLG) are cytoplasmic. The helical transmembrane segment at 243–263 (LPIALALFLEVTLFAVVALLV) threads the bilayer. Topologically, residues 264-275 (SPLGIVDVAGHQ) are periplasmic. A helical membrane pass occupies residues 276–296 (IALNFSSLMFVLPMSLAAAVT). Residues 297 to 313 (IRVGYRLGQGSTLDAQT) are Cytoplasmic-facing. The chain crosses the membrane as a helical span at residues 314-334 (AARTGLMVGVCMATLTAIFTV). At 335 to 349 (SLREQIALLYNDNPE) the chain is on the periplasmic side. A helical transmembrane segment spans residues 350 to 370 (VVTLAAHLMLLAAVYQISDSI). Topologically, residues 371 to 386 (QVIGSGILRGYKDTRS) are cytoplasmic. A helical transmembrane segment spans residues 387-407 (IFYITFTAYWVLGLPSGYILA). Topologically, residues 408-417 (LTDLVVEPMG) are periplasmic. A helical membrane pass occupies residues 418–438 (PAGFWIGFIIGLTSAAIMMML). The Cytoplasmic portion of the chain corresponds to 439–457 (RMRFLQRMPSAIILQRASR).

The protein belongs to the multi antimicrobial extrusion (MATE) (TC 2.A.66.1) family. MdtK subfamily.

The protein resides in the cell inner membrane. Functionally, multidrug efflux pump that functions probably as a Na(+)/drug antiporter. The sequence is that of Multidrug resistance protein MdtK from Shigella flexneri serotype 5b (strain 8401).